The chain runs to 314 residues: Olfactory receptor 5P67 (314 aa).

The Extracellular portion of the chain corresponds to 1–28 (MAFLEDGNHTAVTEFILLGLTDDPVLRV). Residue N8 is glycosylated (N-linked (GlcNAc...) asparagine). A helical transmembrane segment spans residues 29–49 (ILFTIILCIYLVTVSGNLSTI). At 50 to 57 (LLIRVSSQ) the chain is on the cytoplasmic side. A helical transmembrane segment spans residues 58-78 (LHHPMYFFLSHVGSVDIGYSS). Over 79–102 (SVTPNMLVNFLVEKHTIAYLGCGI) the chain is Extracellular. Residues C100 and C192 are joined by a disulfide bond. The chain crosses the membrane as a helical span at residues 103–123 (QLSSAAFFGTAECFLLATMAY). Over 124-136 (DRFVAICNPLLYS) the chain is Cytoplasmic. The helical transmembrane segment at 137–157 (TKMSTQTCIQLVVGSYTGGIL) threads the bilayer. Over 158–199 (NASFAIISFFSFLFCGPNRINHFYCDFAPLVELSCSDINVSV) the chain is Extracellular. The helical transmembrane segment at 200-220 (VITTIFSASVTIITVFVIAIS) threads the bilayer. Topologically, residues 221-240 (YTYILITILKMRSTEGRHKA) are cytoplasmic. The helical transmembrane segment at 241-261 (FSTCTSYLTAVTLFYGTVTFI) threads the bilayer. Over 262–274 (YVVPKSNYSTDQN) the chain is Extracellular. N-linked (GlcNAc...) asparagine glycosylation occurs at N268. Residues 275–295 (KVASVFYIVVIPMLNPLIYSL) traverse the membrane as a helical segment. At 296–314 (RNNDIKGALKRQLGKKTFS) the chain is on the cytoplasmic side.

It belongs to the G-protein coupled receptor 1 family.

The protein resides in the cell membrane. Functionally, potential odorant receptor. This chain is Olfactory receptor 5P67, found in Mus musculus (Mouse).